Consider the following 89-residue polypeptide: Large ribosomal subunit protein bL28 (89 aa).

It belongs to the bacterial ribosomal protein bL28 family.

The sequence is that of Large ribosomal subunit protein bL28 from Chlamydia muridarum (strain MoPn / Nigg).